The primary structure comprises 238 residues: CBS domain-containing protein CBSX2, chloroplastic (238 aa).

Residues 1-71 (MGSISLSNSM…ASVNNNNSVP (71 aa)) constitute a chloroplast transit peptide. CBS domains follow at residues 83-145 (MTPR…QNDT) and 177-234 (MTPS…KRET).

The protein resides in the plastid. Its subcellular location is the chloroplast stroma. The polypeptide is CBS domain-containing protein CBSX2, chloroplastic (CBSX2) (Arabidopsis thaliana (Mouse-ear cress)).